The primary structure comprises 691 residues: F-box/LRR-repeat protein 5 (691 aa).

The hemerythrin-like stretch occupies residues 1-159 (MAPFPEEVDV…IKKKVIAQHC (159 aa)). The Fe(3+) site is built by His-15, His-57, Glu-58, Glu-61, His-80, His-126, and Glu-130. The F-box domain occupies 202–248 (STGITHLPPEVMLSIFSYLNPQELCRCSQVSMKWSQLTKTGSLWKHL). LRR repeat units follow at residues 340 to 364 (SSAVSSKMVRQILELCPNLEHLDLT), 365 to 392 (QTDISDSAFDSWSWLGCCQSLRHLDLSG), 393 to 418 (CEKITDVALEKISRALGILTSHQSGF), 479 to 508 (LWMLDAEDLADIEDTVEWRHRNVESLCVVE), 576 to 607 (TRLPRGKDLIYFGSEKSDQETGRVLLFLSLSG), 608 to 635 (CYQITDHGLRVLTLGGGLPYLEHLNLSG), and 636 to 661 (CLTITGAGLQDLVSACPSLNDEYFYY). Positions 662, 676, 686, and 687 each coordinate [2Fe-2S] cluster.

As to quaternary structure, part of a SCF (SKP1-cullin-F-box) protein ligase complex. Interacts with ACO1/IRP1, IREB2/IRP2; the interaction depends on the [2Fe-2S] cluster. Interacts with DCTN1/p150-glued. [2Fe-2S] cluster serves as cofactor. Post-translationally, polybiquitinated upon iron and oxygen depletion, leading to its degradation by the proteasome. Ubiquitination is regulated by the hemerythrin-like region that acts as an oxygen and iron sensor. Undergoes constitutive ubiquitin-dependent degradation at the steady state by HERC2.

It localises to the cytoplasm. The protein resides in the perinuclear region. Its subcellular location is the nucleus. It functions in the pathway protein modification; protein ubiquitination. An iron-sulfur cluster promotes IRP2 polyubiquitination and degradation in response to both iron and oxygen concentrations. Its function is as follows. Component of some SCF (SKP1-cullin-F-box) protein ligase complex that plays a central role in iron homeostasis by promoting the ubiquitination and subsequent degradation of IREB2/IRP2. The C-terminal domain of FBXL5 contains a redox-sensitive [2Fe-2S] cluster that, upon oxidation, promotes binding to IRP2 to effect its oxygen-dependent degradation. Under iron deficiency conditions, the N-terminal hemerythrin-like (Hr) region, which contains a diiron metal center, cannot bind iron and undergoes conformational changes that destabilize the FBXL5 protein and cause its ubiquitination and degradation. When intracellular iron levels start rising, the Hr region is stabilized. Additional increases in iron levels facilitate the assembly and incorporation of a redox active [2Fe-2S] cluster in the C-terminal domain. Only when oxygen level is high enough to maintain the cluster in its oxidized state can FBXL5 recruit IRP2 as a substrate for polyubiquination and degradation. Promotes ubiquitination and subsequent degradation of the dynactin complex component DCTN1. Within the nucleus, promotes the ubiquitination of SNAI1; preventing its interaction with DNA and promoting its degradation. Negatively regulates DNA damage response by mediating the ubiquitin-proteasome degradation of the DNA repair protein NABP2. In Pongo abelii (Sumatran orangutan), this protein is F-box/LRR-repeat protein 5 (FBXL5).